The sequence spans 269 residues: 4-hydroxy-tetrahydrodipicolinate reductase (269 aa).

NAD(+) is bound by residues G10 to M15, E36, G99 to T101, and A123 to F126. H156 (proton donor/acceptor) is an active-site residue. Residue H157 participates in (S)-2,3,4,5-tetrahydrodipicolinate binding. Catalysis depends on K160, which acts as the Proton donor. Residue G166–T167 coordinates (S)-2,3,4,5-tetrahydrodipicolinate.

This sequence belongs to the DapB family.

Its subcellular location is the cytoplasm. The catalysed reaction is (S)-2,3,4,5-tetrahydrodipicolinate + NAD(+) + H2O = (2S,4S)-4-hydroxy-2,3,4,5-tetrahydrodipicolinate + NADH + H(+). It catalyses the reaction (S)-2,3,4,5-tetrahydrodipicolinate + NADP(+) + H2O = (2S,4S)-4-hydroxy-2,3,4,5-tetrahydrodipicolinate + NADPH + H(+). It participates in amino-acid biosynthesis; L-lysine biosynthesis via DAP pathway; (S)-tetrahydrodipicolinate from L-aspartate: step 4/4. In terms of biological role, catalyzes the conversion of 4-hydroxy-tetrahydrodipicolinate (HTPA) to tetrahydrodipicolinate. This is 4-hydroxy-tetrahydrodipicolinate reductase from Neisseria meningitidis serogroup A / serotype 4A (strain DSM 15465 / Z2491).